Reading from the N-terminus, the 450-residue chain is tRNA modification GTPase MnmE (450 aa).

(6S)-5-formyl-5,6,7,8-tetrahydrofolate-binding residues include R23, E79, and K118. Residues 214–374 enclose the TrmE-type G domain; it reads GITLILVGKP…LKEHILNKVG (161 aa). A K(+)-binding site is contributed by N224. GTP contacts are provided by residues 224 to 229, 243 to 249, and 268 to 271; these read NAGKSS, TSIAGTT, and DTAG. Mg(2+) is bound at residue S228. 3 residues coordinate K(+): T243, I245, and T248. T249 provides a ligand contact to Mg(2+). K450 is a binding site for (6S)-5-formyl-5,6,7,8-tetrahydrofolate.

The protein belongs to the TRAFAC class TrmE-Era-EngA-EngB-Septin-like GTPase superfamily. TrmE GTPase family. Homodimer. Heterotetramer of two MnmE and two MnmG subunits. K(+) is required as a cofactor.

It is found in the cytoplasm. In terms of biological role, exhibits a very high intrinsic GTPase hydrolysis rate. Involved in the addition of a carboxymethylaminomethyl (cmnm) group at the wobble position (U34) of certain tRNAs, forming tRNA-cmnm(5)s(2)U34. The protein is tRNA modification GTPase MnmE of Francisella tularensis subsp. novicida (strain U112).